The following is a 399-amino-acid chain: C-type lectin domain family 4 member M (399 aa).

Over 1-49 the chain is Cytoplasmic; it reads MSDSKEQRVQPLGLLEEDPTTSGIRLFPRDFQFQQTHGHKSSTGCLGHG. Residues 14–15 carry the Endocytosis signal motif; the sequence is LL. Residues 50–70 form a helical; Signal-anchor for type II membrane protein membrane-spanning segment; sequence PLVLQLLSFTLLAGVLVAILV. At 71 to 399 the chain is on the extracellular side; that stretch reads QVYKVPSSLS…KKPTACFRDE (329 aa). N92 carries an N-linked (GlcNAc...) asparagine glycan. 7 consecutive repeat copies span residues 108–130, 131–153, 154–176, 177–199, 200–222, 223–245, and 246–268. The 7 X approximate tandem repeats stretch occupies residues 108 to 269; it reads KLQEIYQELI…AFERLCCRCP (162 aa). 4 cysteine pairs are disulfide-bonded: C265/C395, C268/C279, C296/C389, and C368/C381. The C-type lectin domain occupies 274–390; sequence FFQGNCYFIS…CNVDNYWICK (117 aa). Residues E359, N361, S363, E366, N377, and D378 each coordinate Ca(2+). N361 carries an N-linked (GlcNAc...) asparagine glycan.

As to quaternary structure, homotetramer.

Its subcellular location is the membrane. Functionally, probable pathogen-recognition receptor involved in peripheral immune surveillance in liver. May mediate the endocytosis of pathogens which are subsequently degraded in lysosomal compartments. Probably recognizes in a calcium-dependent manner high mannose N-linked oligosaccharides in a variety of pathogen antigens. Is a receptor for ICAM3, probably by binding to mannose-like carbohydrates. The protein is C-type lectin domain family 4 member M (CLEC4M) of Hylobates lar (Lar gibbon).